The following is a 244-amino-acid chain: tRNA pseudouridine synthase A (244 aa).

Asp52 serves as the catalytic Nucleophile. Tyr110 serves as a coordination point for substrate.

The protein belongs to the tRNA pseudouridine synthase TruA family. As to quaternary structure, homodimer.

The catalysed reaction is uridine(38/39/40) in tRNA = pseudouridine(38/39/40) in tRNA. Formation of pseudouridine at positions 38, 39 and 40 in the anticodon stem and loop of transfer RNAs. This Clostridium botulinum (strain Alaska E43 / Type E3) protein is tRNA pseudouridine synthase A.